The primary structure comprises 390 residues: Neuromedin-B receptor (390 aa).

The interval 1–20 is disordered; that stretch reads MPPRSLPNLSLPTEASESEL. Topologically, residues 1 to 41 are extracellular; that stretch reads MPPRSLPNLSLPTEASESELEPEVWENDFLPDSDGTTAELV. The N-linked (GlcNAc...) asparagine glycan is linked to Asn-8. Residues 42 to 65 form a helical membrane-spanning segment; sequence IRCVIPSLYLIIISVGLLGNIMLV. Residues 66–79 lie on the Cytoplasmic side of the membrane; it reads KIFLTNSTMRSVPN. A helical transmembrane segment spans residues 80-99; the sequence is IFISNLAAGDLLLLLTCVPV. Residues 100–117 are Extracellular-facing; it reads DASRYFFDEWVFGKLGCK. Residues Cys-116 and Cys-198 are joined by a disulfide bond. The helical transmembrane segment at 118-139 threads the bilayer; the sequence is LIPAIQLTSVGVSVFTLTALSA. The Cytoplasmic portion of the chain corresponds to 140 to 156; sequence DRYRAIVNPMDMQTSGV. The helical transmembrane segment at 157-177 threads the bilayer; it reads VLWTSLKAVGIWVVSVLLAVP. Topologically, residues 178–211 are extracellular; that stretch reads EAVFSEVARIGSSDNSSFTACIPYPQTDELHPKI. N-linked (GlcNAc...) asparagine glycosylation is present at Asn-192. Residues 212 to 235 form a helical membrane-spanning segment; the sequence is HSVLIFLVYFLIPLVIISIYYYHI. Topologically, residues 236-266 are cytoplasmic; that stretch reads AKTLIRSAHNLPGEYNEHTKKQMETRKRLAK. The chain crosses the membrane as a helical span at residues 267–287; it reads IVLVFVGCFVFCWFPNHILYL. Residues 288 to 299 lie on the Extracellular side of the membrane; it reads YRSFNYKEIDPS. A helical transmembrane segment spans residues 300–327; the sequence is LGHMIVTLVARVLSFSNSCVNPFALYLL. Residues 328–390 lie on the Cytoplasmic side of the membrane; that stretch reads SESFRKHFNS…GHSTKQEIAL (63 aa). Cys-341 carries S-palmitoyl cysteine lipidation. Ser-352 is modified (phosphoserine).

It belongs to the G-protein coupled receptor 1 family. In terms of tissue distribution, brain (olfactory bulb and central thalamic regions), and esophagus.

Its subcellular location is the cell membrane. Receptor for neuromedin-B. Contributes to the maintenance of basal sigh rate through signaling in the pre-Botzinger complex, a cluster of several thousand neurons in the ventrolateral medulla responsible for inspiration during respiratory activity. Contributes to the induction of sneezing following exposure to chemical irritants or allergens which causes release of NMB by nasal sensory neurons and activation of NMBR-expressing neurons in the sneeze-evoking region of the brainstem. These in turn activate neurons of the caudal ventral respiratory group, giving rise to the sneezing response. Contributes to induction of acute itch, possibly through its activation on dorsal root ganglion neurons by the NMB peptide. Plays a role in the innate immune response to influenza A virus infection by enhancing interferon alpha expression and reducing expression of IL6. Plays a role in CSF1-induced proliferation of osteoclast precursors by contributing to the positive regulation of the expression of the CSF1 receptor CSF1R. In Rattus norvegicus (Rat), this protein is Neuromedin-B receptor (Nmbr).